Here is a 1313-residue protein sequence, read N- to C-terminus: Mitogen-activated protein kinase kinase kinase 15 (1313 aa).

Residues 1–58 (MESGGGNAPAGALGAASESPQCPPPPGVEGAAGPAEPDGAAEGAAGGSGEGESGGGPR) form a disordered region. Residues 28–43 (VEGAAGPAEPDGAAEG) show a composition bias toward low complexity. Gly residues predominate over residues 44-57 (AAGGSGEGESGGGP). The Protein kinase domain occupies 652–908 (NGERVVLGKG…TAELLREGFL (257 aa)). ATP contacts are provided by residues 658–666 (LGKGTYGIV) and Lys681. The active-site Proton acceptor is the Asp773. Residues 939-958 (EPMATSSSEHGSVSPDSDAQ) form a disordered region. Residues 942–955 (ATSSSEHGSVSPDS) show a composition bias toward polar residues. Phosphoserine is present on Ser994. Residues 1179-1225 (QLGELRQETNRLLEHLVEKEREYQNLLRQTLEQKTQELYHLQLKLKS) adopt a coiled-coil conformation.

This sequence belongs to the protein kinase superfamily. STE Ser/Thr protein kinase family. MAP kinase kinase kinase subfamily. It depends on Mg(2+) as a cofactor. In terms of tissue distribution, isoform 2 and isoform 3 are widely expressed. Isoform 2 highest levels are observed in fetal brain, and isoform 3 highest levels in pancreas, peripheral blood leukocytes, fetal brain and spleen.

It carries out the reaction L-seryl-[protein] + ATP = O-phospho-L-seryl-[protein] + ADP + H(+). It catalyses the reaction L-threonyl-[protein] + ATP = O-phospho-L-threonyl-[protein] + ADP + H(+). With respect to regulation, contains an N-terminal autoinhibitory domain. Activated by phosphorylation at Thr-812, inhibited by phosphorylation at Ser-924 and Ser-994. In terms of biological role, serine/threonine kinase which acts as a component of the MAP kinase signal transduction pathway. Once activated, acts as an upstream activator of the p38 MAPK signal transduction cascade through the phosphorylation and activation of several MAP kinase kinases. May function in a signal transduction pathway that is activated by various cell stresses and leads to apoptosis. Involved in phosphorylation of WNK4 in response to osmotic stress or hypotonic low-chloride stimulation via the p38 MAPK signal transduction cascade. This Homo sapiens (Human) protein is Mitogen-activated protein kinase kinase kinase 15 (MAP3K15).